A 1321-amino-acid polypeptide reads, in one-letter code: Lysine-specific demethylase 3A (1321 aa).

Ser264 and Ser325 each carry phosphoserine. 3 disordered regions span residues 307-336 (ATPP…IPQG), 383-402 (LTEP…QENR), and 438-472 (KHLE…GKKV). The span at 316–327 (QQSTPQAANSPP) shows a compositional bias: polar residues. Ser445 is subject to Phosphoserine. The C6-type zinc-finger motif lies at 662–687 (CDVCDTTIFNLHWVCPRCGFGVCVDC). Residue Ser766 is modified to Phosphoserine. The LXXLL motif signature appears at 885–889 (LRNLL). An N6-acetyllysine modification is found at Lys895. The JmjC domain maps to 1058-1281 (MPSRFDDLMA…HCFWLTQEFR (224 aa)). Positions 1120, 1122, and 1249 each coordinate Fe cation.

The protein belongs to the JHDM2 histone demethylase family. Interacts with VRK1. It depends on Fe(2+) as a cofactor.

The protein resides in the cytoplasm. The protein localises to the nucleus. The enzyme catalyses N(6),N(6)-dimethyl-L-lysyl(9)-[histone H3] + 2 2-oxoglutarate + 2 O2 = L-lysyl(9)-[histone H3] + 2 formaldehyde + 2 succinate + 2 CO2. Histone demethylase that specifically demethylates 'Lys-9' of histone H3, thereby playing a central role in histone code. Preferentially demethylates mono- and dimethylated H3 'Lys-9' residue, with a preference for dimethylated residue, while it has weak or no activity on trimethylated H3 'Lys-9'. Demethylation of Lys residue generates formaldehyde and succinate. Involved in hormone-dependent transcriptional activation, by participating in recruitment to androgen-receptor target genes, resulting in H3 'Lys-9' demethylation and transcriptional activation. Involved in spermatogenesis by regulating expression of target genes such as PRM1 and TNP1 which are required for packaging and condensation of sperm chromatin. Involved in obesity resistance through regulation of metabolic genes such as PPARA and UCP1. This chain is Lysine-specific demethylase 3A (KDM3A), found in Homo sapiens (Human).